We begin with the raw amino-acid sequence, 210 residues long: ATP-dependent Clp protease proteolytic subunit (210 aa).

Ser-107 (nucleophile) is an active-site residue. The active site involves His-132.

This sequence belongs to the peptidase S14 family. Fourteen ClpP subunits assemble into 2 heptameric rings which stack back to back to give a disk-like structure with a central cavity, resembling the structure of eukaryotic proteasomes.

The protein localises to the cytoplasm. The catalysed reaction is Hydrolysis of proteins to small peptides in the presence of ATP and magnesium. alpha-casein is the usual test substrate. In the absence of ATP, only oligopeptides shorter than five residues are hydrolyzed (such as succinyl-Leu-Tyr-|-NHMec, and Leu-Tyr-Leu-|-Tyr-Trp, in which cleavage of the -Tyr-|-Leu- and -Tyr-|-Trp bonds also occurs).. Its function is as follows. Cleaves peptides in various proteins in a process that requires ATP hydrolysis. Has a chymotrypsin-like activity. Plays a major role in the degradation of misfolded proteins. This Ruegeria sp. (strain TM1040) (Silicibacter sp.) protein is ATP-dependent Clp protease proteolytic subunit.